A 353-amino-acid chain; its full sequence is Phospho-N-acetylmuramoyl-pentapeptide-transferase (353 aa).

Transmembrane regions (helical) follow at residues 13–33, 66–86, 88–108, 130–150, 162–182, 193–213, 229–249, 256–276, 281–301, and 330–350; these read ILGYITIRAGIAFFLALFFTL, TPTMGGIVFIFATILASLISI, FSNLYAVGAVLTLIFFSIIGF, LILQTTFALIISIFLYTLSDF, PLFDMGIFAIFFWVIVIIATS, GLATVPSITALASFSIIIYIT, IGEVAIVSSALIGALSGFLWY, VFMGDSGSLTIGAFLGYLAII, ILLLLIGSIFVIETLSVILQV, and KIIVRFWIIATLSNVIALITL.

This sequence belongs to the glycosyltransferase 4 family. MraY subfamily. It depends on Mg(2+) as a cofactor.

The protein localises to the cell inner membrane. It carries out the reaction UDP-N-acetyl-alpha-D-muramoyl-L-alanyl-gamma-D-glutamyl-meso-2,6-diaminopimeloyl-D-alanyl-D-alanine + di-trans,octa-cis-undecaprenyl phosphate = di-trans,octa-cis-undecaprenyl diphospho-N-acetyl-alpha-D-muramoyl-L-alanyl-D-glutamyl-meso-2,6-diaminopimeloyl-D-alanyl-D-alanine + UMP. It functions in the pathway cell wall biogenesis; peptidoglycan biosynthesis. Its function is as follows. Catalyzes the initial step of the lipid cycle reactions in the biosynthesis of the cell wall peptidoglycan: transfers peptidoglycan precursor phospho-MurNAc-pentapeptide from UDP-MurNAc-pentapeptide onto the lipid carrier undecaprenyl phosphate, yielding undecaprenyl-pyrophosphoryl-MurNAc-pentapeptide, known as lipid I. The chain is Phospho-N-acetylmuramoyl-pentapeptide-transferase from Sulfurimonas denitrificans (strain ATCC 33889 / DSM 1251) (Thiomicrospira denitrificans (strain ATCC 33889 / DSM 1251)).